We begin with the raw amino-acid sequence, 443 residues long: Thymidine phosphorylase (443 aa).

It belongs to the thymidine/pyrimidine-nucleoside phosphorylase family. Homodimer.

It carries out the reaction thymidine + phosphate = 2-deoxy-alpha-D-ribose 1-phosphate + thymine. It functions in the pathway pyrimidine metabolism; dTMP biosynthesis via salvage pathway; dTMP from thymine: step 1/2. Its function is as follows. The enzymes which catalyze the reversible phosphorolysis of pyrimidine nucleosides are involved in the degradation of these compounds and in their utilization as carbon and energy sources, or in the rescue of pyrimidine bases for nucleotide synthesis. The protein is Thymidine phosphorylase of Shewanella loihica (strain ATCC BAA-1088 / PV-4).